Consider the following 1562-residue polypeptide: MKSSGIAGDSNGFETNFLNETTNREEDGAFNWNAADDGTNERREDIHVRFQDSALPLGIDENELDEIDINGDSKKLDSVEVDESHDVNSPSDSRLKSSFKSVLELTANSMVSVLTPSTKTEQTSKGKGKKKKAHVSFLEGPVEEIPLDDIEPTSPREASPVFNGRPPIPPEFLKSRHKEFTIPNPLQFISNFLSNLFSRDTRYLKSSHGRIIIINPYDDSSQIDERTGKPYMQNSIVSSRYNKYNFVPLQIIAQFSKTANCYFLLIAIMQMIPGWSTTGTYTTIIPLLIFISIAILREGFDNYRRYRQDRVENRIQTQVLRHVDVDPPIVEEHSSFFRRRRWRRSRSQESASRSTIRSTDEREPERTSEDPPQLPPSPSSPSSPALSVKPNIDPQPPLYNSTLTTTRSIPANKPTFFWASCDRKDVRVGDIIRLTSDQTLPADVIALSSPNPNGAIYIETAALDGETSLKTRLVNSTLRSLCKDINDLIRLSGTCTVEDPNGDLYNFNGSMKLDSIQGEIPLSNNDVLYRGSNLRNTSELFALVIFTGEESKIRMNAVRNVSVKAPSMQKVTNRIVIFIFALVVSMAIYCTAAYFVWQKKVERKLWYLTNSKLSFVPILVSFIILYNTMVPISLYVSMEIIRVFQTFLVQSDIDLYYPENDTRCEVRSSSILEELGQVTHVFSDKTGTLTDNIMLFRNLSVGGFAWQHVGAENPKLVSTSQKSDDLDGEAKPPQLENIQGTTIQLLQYVHDNPHTTFSKRVRIFLLNLAICHTCLPSFDEENQIYKYQSISPDELALVHAAQQLGYIVIDRDIDSLTIRLHYPLDPHSHPIAKTYRILNIIEFTSKRKCMSVIVRMPNGRICLFCKGADSAIIKRLRLSNLAKRKDKSVTKAEQARKSIEIDKAIIRNSQSTSRPSLTASRPSLSRRRNDYINNVTSWLDERREKMGVVRPRASTSILETRRRPAVGRHSLAGGERLMEDKKYLSKQEEAEGSIYESLNHNDAKLFENTFEHVHAFATDGLRTLMYAHRFIDESEYQSWKLVNDAALNSLSNRQQLLDEAADLIEKDLEFAGATAIEDKLQVGVPESINSLFRAGIKFWMLTGDKKETAINIGHSCGVIKEYSTVVVMGSLDGVEGSDETVSGGQRLSLDRPPTNDPASLMIHQLISCMNAIHSNSLAHLVIVIDGSTLADIENDPELFLLFINTAVEADSVICCRSSPMQKALMVQKVRNTLEKAVTLAIGDGANDIAMIQEAHVGIGIAGREGLQAARSSDFSIGRFKFLIKLLFCHGRWSYVRLSKYILGTFYKEQFFFLMQAIMQPFVGYTGQSLYESWGLTCFNTLFSSLCVIGLGIFEKDLSASTVIAVPELYQKGINNEAFNWRVYFGWCSIAFIQAFLVFYVTYSLFGMKELNDNNIFAYGQLIFTAAIFIMNFKLVFIEMQYINIISIIVLVLTSLAWFLFNIFISEHYPDKNLYLARSQFLHHFGKNPSWWLTMLFVMVCALTIDIVAQMLRRTLRPTDTDIFVEMENDAFVRSRFEQESGEFLQANAPSVDEIEQYLKSRD.

4 disordered regions span residues 1-38, 55-94, 115-134, and 146-166; these read MKSS…ADDG, LPLG…SDSR, TPST…KKAH, and PLDD…NGRP. Topologically, residues 1 to 275 are extracellular; the sequence is MKSSGIAGDS…IAIMQMIPGW (275 aa). The span at 12–21 shows a compositional bias: polar residues; it reads GFETNFLNET. Acidic residues predominate over residues 60-69; it reads DENELDEIDI. The span at 71–86 shows a compositional bias: basic and acidic residues; the sequence is GDSKKLDSVEVDESHD. Residues 276–296 traverse the membrane as a helical segment; the sequence is STTGTYTTIIPLLIFISIAIL. At 297-574 the chain is on the cytoplasmic side; the sequence is REGFDNYRRY…APSMQKVTNR (278 aa). The interval 347–406 is disordered; it reads SQESASRSTIRSTDEREPERTSEDPPQLPPSPSSPSSPALSVKPNIDPQPPLYNSTLTTT. Residues 358–369 are compositionally biased toward basic and acidic residues; sequence STDEREPERTSE. Pro residues predominate over residues 372–381; that stretch reads PQLPPSPSSP. A helical membrane pass occupies residues 575–595; the sequence is IVIFIFALVVSMAIYCTAAYF. Topologically, residues 596-614 are extracellular; that stretch reads VWQKKVERKLWYLTNSKLS. The helical transmembrane segment at 615-635 threads the bilayer; that stretch reads FVPILVSFIILYNTMVPISLY. The Cytoplasmic segment spans residues 636–1309; it reads VSMEIIRVFQ…YILGTFYKEQ (674 aa). Residue Asp-684 is the 4-aspartylphosphate intermediate of the active site. 8 residues coordinate ATP: Asp-684, Lys-685, Thr-686, Glu-794, Phe-843, Ser-845, Lys-848, and Lys-866. Position 684 (Asp-684) interacts with Mg(2+). Position 686 (Thr-686) interacts with Mg(2+). Ser-954 carries the phosphoserine modification. ATP contacts are provided by residues Arg-1022, Thr-1023, Thr-1102, Gly-1103, Asp-1104, 1181–1188, Arg-1216, and Lys-1222; that span reads VIVIDGST. Asp-1243 is a binding site for Mg(2+). ATP is bound by residues Asn-1246 and Asp-1247. A helical membrane pass occupies residues 1310-1330; it reads FFFLMQAIMQPFVGYTGQSLY. Topologically, residues 1331-1332 are extracellular; it reads ES. The helical transmembrane segment at 1333-1353 threads the bilayer; sequence WGLTCFNTLFSSLCVIGLGIF. Residues 1354 to 1381 lie on the Cytoplasmic side of the membrane; sequence EKDLSASTVIAVPELYQKGINNEAFNWR. A helical transmembrane segment spans residues 1382-1402; it reads VYFGWCSIAFIQAFLVFYVTY. Residues 1403–1414 lie on the Extracellular side of the membrane; the sequence is SLFGMKELNDNN. The helical transmembrane segment at 1415 to 1435 threads the bilayer; it reads IFAYGQLIFTAAIFIMNFKLV. Over 1436 to 1443 the chain is Cytoplasmic; that stretch reads FIEMQYIN. The helical transmembrane segment at 1444-1464 threads the bilayer; sequence IISIIVLVLTSLAWFLFNIFI. Residues 1465 to 1490 lie on the Extracellular side of the membrane; sequence SEHYPDKNLYLARSQFLHHFGKNPSW. The helical transmembrane segment at 1491–1511 threads the bilayer; that stretch reads WLTMLFVMVCALTIDIVAQML. Residues 1512 to 1562 lie on the Cytoplasmic side of the membrane; it reads RRTLRPTDTDIFVEMENDAFVRSRFEQESGEFLQANAPSVDEIEQYLKSRD.

This sequence belongs to the cation transport ATPase (P-type) (TC 3.A.3) family. Type IV subfamily. It depends on Mg(2+) as a cofactor.

It is found in the golgi apparatus. The protein resides in the trans-Golgi network membrane. It localises to the endosome membrane. It catalyses the reaction ATP + H2O + phospholipidSide 1 = ADP + phosphate + phospholipidSide 2.. The catalysed reaction is a 1,2-diacyl-sn-glycero-3-phosphocholine(out) + ATP + H2O = a 1,2-diacyl-sn-glycero-3-phosphocholine(in) + ADP + phosphate + H(+). It carries out the reaction a 1,2-diacyl-sn-glycero-3-phosphoethanolamine(out) + ATP + H2O = a 1,2-diacyl-sn-glycero-3-phosphoethanolamine(in) + ADP + phosphate + H(+). Its function is as follows. Catalytic component of a P4-ATPase flippase complex which catalyzes the hydrolysis of ATP coupled to the transport of phosphatidylcholine and small amounts of phosphatidylethanolamine from the lumen to the cytosolic leaflet of the trans-Golgi network and ensures the maintenance of asymmetric distribution of phospholipids. May be involved in transport from early endosomes to the trans-Golgi network (TGN). The sequence is that of Phospholipid-transporting ATPase dnf1 from Schizosaccharomyces pombe (strain 972 / ATCC 24843) (Fission yeast).